The primary structure comprises 333 residues: Flagellar P-ring protein (333 aa).

The first 22 residues, M1–A22, serve as a signal peptide directing secretion.

This sequence belongs to the FlgI family. The basal body constitutes a major portion of the flagellar organelle and consists of four rings (L,P,S, and M) mounted on a central rod.

The protein localises to the periplasm. It localises to the bacterial flagellum basal body. Assembles around the rod to form the L-ring and probably protects the motor/basal body from shearing forces during rotation. This is Flagellar P-ring protein from Fervidobacterium nodosum (strain ATCC 35602 / DSM 5306 / Rt17-B1).